The sequence spans 85 residues: Small ribosomal subunit protein bS18 (85 aa).

It belongs to the bacterial ribosomal protein bS18 family. In terms of assembly, part of the 30S ribosomal subunit. Forms a tight heterodimer with protein bS6.

Binds as a heterodimer with protein bS6 to the central domain of the 16S rRNA, where it helps stabilize the platform of the 30S subunit. In Hyphomonas neptunium (strain ATCC 15444), this protein is Small ribosomal subunit protein bS18.